The following is a 1825-amino-acid chain: Proteasome activator complex subunit 4B (1825 aa).

HEAT repeat units follow at residues 458–502 (PEGP…LVDC), 981–1020 (NFCC…NHCG), 1162–1200 (YPLP…QLKR), 1336–1374 (DAFL…GSKH), 1618–1656 (PEQI…YNLF), and 1662–1700 (EQCV…CNFL). The interval 1632-1720 (AGSSSWHARY…EALCKTRLPK (89 aa)) is bromodomain-like (BRDL).

Belongs to the BLM10 family. In terms of assembly, homodimer. Interacts with the 20S and 26S proteasomes.

It is found in the cytoplasm. The protein resides in the cytosol. The protein localises to the nucleus. Its subcellular location is the nucleus speckle. In terms of biological role, associated component of the proteasome that specifically recognizes acetylated histones and promotes ATP- and ubiquitin-independent degradation of core histones during DNA damage response. Recognizes and binds acetylated histones via its bromodomain-like (BRDL) region and activates the proteasome by opening the gated channel for substrate entry. Binds to the core proteasome via its C-terminus, which occupies the same binding sites as the proteasomal ATPases, opening the closed structure of the proteasome via an active gating mechanism. involved in DNA damage response in somatic cells: binds to acetylated histones and promotes degradation of histones. In Danio rerio (Zebrafish), this protein is Proteasome activator complex subunit 4B (psme4b).